A 611-amino-acid chain; its full sequence is MSDSGYELSFSLNTLNHLSEGLYSNILRFYLKLVANAWDADATEVSINIRQDEIVIQDNGIGMSIEDANTKFLRIGHQKREDSANTISGRHVMGRKGIGILAIFGIANIAEVYSCKDGVPHGFIIHKGDIERGISSDVTLYRPSSVPQEALSIESGTKIILREIKSSIGNAEKTLRTDLARRFTIINNNCNFSVIINNTPINDNDRDYLNKVQFLWYLGGESSKYANFFTKLKKSFEITNLGDGMSGMTVKGWIGTVYRPSDIPNEQPYHIYFAHGKMIQEDILIDITDAGLYRQYIIGEIEADFMDSDDEDDIITSNRQRIKQTDPRYLKLLEYVKIDIMRVIASTWTKLRKEYPSNPKKEEVNDSSLSKDSNSSEKENTNASSDSSTATENASSDSSTATENASSETNDGEVEDNSFFDDDIPEPSPPPKQEITTAFREMKNLVKNSNIPNQMKNIILYDIQQAAYAYKGTSFKACIVMLGAILEGVMLGTIQRTDVLEYLIALPQVPKPLSDLGPRNPKFADRTVLAQYIGTTFSFQDCKEIIELCVQGTNKLGVDILQTVRNSIHPGSVLKDMKQLARFNHQSAVGYIAKLHEIINLVILWNPPSIP.

Residues Tyr-355 to Val-364 are compositionally biased toward basic and acidic residues. The disordered stretch occupies residues Tyr-355–Glu-434. The segment covering Thr-381–Thr-409 has biased composition (low complexity). 2 tandem repeats follow at residues Asn-382–Glu-392 and Asn-393–Glu-403. Residues Asn-382 to Glu-403 form a 2.5 X 11 AA tandem repeats region. The 3; truncated repeat unit spans residues Asn-404–Thr-409. Residues Asn-410–Pro-425 are compositionally biased toward acidic residues.

The enzyme catalyses Endonucleolytic cleavage of DNA to give specific double-stranded fragments with terminal 5'-phosphates.. Its function is as follows. According to REBASE this is a P subtype restriction enzyme that recognizes the double-stranded sequence 5'-GTCGAC-3' and cleaves after G-1. No restriction activity was detected upon overexpressing this protein in E.coli. In Herpetosiphon aurantiacus (Herpetosiphon giganteus), this protein is Putative type II restriction enzyme HgiDII.